Here is a 269-residue protein sequence, read N- to C-terminus: Regulatory protein RecX (269 aa).

This sequence belongs to the RecX family.

The protein localises to the cytoplasm. Its function is as follows. Modulates RecA activity. The sequence is that of Regulatory protein RecX from Listeria monocytogenes serotype 4a (strain HCC23).